Reading from the N-terminus, the 312-residue chain is MNKTVRIGTRGSKLALWQAEHVAACLQTKGLEPQIVIIDTTGDKILDQSLSKIGSKGLFTEELEEQLHAGTIDIAVHSAKDLQTHLKGGMYILAITERELVNDVLVSHKPIDTLKNNPDLIIGTSSTRRRALLRKFYPQAKMVDMRGNLQTRIRKMEEGACDAMLLAYAGMHRMGYDSLIKEKLSLEEFIPAAGQGTLAIEAASTLDKEKAAVIRAVLNDAATETAVSAERAFLRTLEGGCSIPVFALAVERDTDYLLTGGIVSLDGTKYLRKEIRFTAADAEQRGVELATVLLKDGADEILAEIKKGLSKS.

S-(dipyrrolylmethanemethyl)cysteine is present on Cys241.

It belongs to the HMBS family. In terms of assembly, monomer. Requires dipyrromethane as cofactor.

It carries out the reaction 4 porphobilinogen + H2O = hydroxymethylbilane + 4 NH4(+). It functions in the pathway porphyrin-containing compound metabolism; protoporphyrin-IX biosynthesis; coproporphyrinogen-III from 5-aminolevulinate: step 2/4. Tetrapolymerization of the monopyrrole PBG into the hydroxymethylbilane pre-uroporphyrinogen in several discrete steps. The sequence is that of Porphobilinogen deaminase from Cytophaga hutchinsonii (strain ATCC 33406 / DSM 1761 / CIP 103989 / NBRC 15051 / NCIMB 9469 / D465).